A 335-amino-acid chain; its full sequence is Succinylglutamate desuccinylase (335 aa).

Residues histidine 59, glutamate 62, and histidine 151 each coordinate Zn(2+). The active site involves glutamate 215.

This sequence belongs to the AspA/AstE family. Succinylglutamate desuccinylase subfamily. The cofactor is Zn(2+).

The enzyme catalyses N-succinyl-L-glutamate + H2O = L-glutamate + succinate. Its pathway is amino-acid degradation; L-arginine degradation via AST pathway; L-glutamate and succinate from L-arginine: step 5/5. Functionally, transforms N(2)-succinylglutamate into succinate and glutamate. This chain is Succinylglutamate desuccinylase, found in Pseudomonas putida (strain ATCC 47054 / DSM 6125 / CFBP 8728 / NCIMB 11950 / KT2440).